Reading from the N-terminus, the 261-residue chain is Basic leucine zipper 19 (261 aa).

2 disordered regions span residues 1-22 (MEDG…MGEL) and 74-100 (ESDE…LGNR). A compositionally biased stretch (polar residues) spans 8–18 (FSNQEVFSSSE). A compositionally biased stretch (basic and acidic residues) spans 88–100 (CGKKGEKRPLGNR). The bZIP domain maps to 89–155 (GKKGEKRPLG…SRLKCLLVDL (67 aa)). The segment at 90-113 (KKGEKRPLGNREAVRKYREKKKAK) is basic motif. A leucine-zipper region spans residues 117–131 (LEDEVARLRAVNQQL). Positions 237–248 (NGSFSNVNTSVS) are enriched in low complexity. Residues 237 to 261 (NGSFSNVNTSVSNKRKGGHRASRAV) form a disordered region. Over residues 249-261 (NKRKGGHRASRAV) the composition is skewed to basic residues.

It is found in the nucleus. Functionally, transcription factor involved in the response to zinc ion deficiency. Binds to the consensus sequence 5'-[AG]TGTCGACA[CT]-3' also called zinc deficiency response element (ZDRE). The ZDRE sequence is conserved in the plant kingdom and present in the promoters of genes that constitute the primary response to zinc deficiency, comprising additional ZIP metal transporter genes. Required for zinc accumulation in roots. Mediates the expression of the zinc transporters ZIP3, ZIP4, ZIP5 and ZIP9 during growth in zinc-deficient conditions. ZIP9 transporter is involved in zinc uptake in roots. In Arabidopsis thaliana (Mouse-ear cress), this protein is Basic leucine zipper 19.